Reading from the N-terminus, the 452-residue chain is Cobyrinate a,c-diamide synthase (452 aa).

Residues 246-439 (TLAYALDDAF…LHVHFYQDEQ (194 aa)) enclose the GATase cobBQ-type domain. Catalysis depends on Cys328, which acts as the Nucleophile.

This sequence belongs to the CobB/CbiA family. The cofactor is Mg(2+).

It catalyses the reaction cob(II)yrinate + 2 L-glutamine + 2 ATP + 2 H2O = cob(II)yrinate a,c diamide + 2 L-glutamate + 2 ADP + 2 phosphate + 2 H(+). It functions in the pathway cofactor biosynthesis; adenosylcobalamin biosynthesis; cob(II)yrinate a,c-diamide from sirohydrochlorin (anaerobic route): step 10/10. Its function is as follows. Catalyzes the ATP-dependent amidation of the two carboxylate groups at positions a and c of cobyrinate, using either L-glutamine or ammonia as the nitrogen source. This is Cobyrinate a,c-diamide synthase from Streptococcus sanguinis (strain SK36).